The sequence spans 346 residues: MAPRSLLLLFSGALALTETWAGSHSLRYFSTAVSRPGRGEPRYIAVEYVDDTQFLRFDSDAAIPRMEPREPWVEQEGPQYWERTTGYAKANAQTDRVALRNLLRRYNQSEAGSHTLQGMNGCDMGPDGRLLRGYHQHAYDGKDYISLNEDLRSWTAADTVAQITQRFYEAEEYAEEFRTYLEGECLELLRRYLENGKETLQRADPPKAHIAHHPISDHEATLRCWALGFYPAEITLTWQRDGEEQTQDTELVETRPAGDGNFQKWAAVVVPSGEEQRYTCHVQHEGLPQPLTLRWEQSPQPTIPIVGIVAGLVVLGAVVTGAVVAAVMWRKKSSDRNRGSYSQAAV.

A signal peptide spans 1–21 (MAPRSLLLLFSGALALTETWA). The segment at 22–111 (GSHSLRYFST…LLRRYNQSEA (90 aa)) is alpha-1. Residues 22–305 (GSHSLRYFST…EQSPQPTIPI (284 aa)) are Extracellular-facing. Asparagine 107 carries an N-linked (GlcNAc...) asparagine glycan. The segment at 112–203 (GSHTLQGMNG…ENGKETLQRA (92 aa)) is alpha-2. Cystine bridges form between cysteine 122/cysteine 185 and cysteine 224/cysteine 280. Residues 204–295 (DPPKAHIAHH…GLPQPLTLRW (92 aa)) are alpha-3. One can recognise an Ig-like C1-type domain in the interval 206 to 294 (PKAHIAHHPI…EGLPQPLTLR (89 aa)). The segment at 296-305 (EQSPQPTIPI) is connecting peptide. A helical membrane pass occupies residues 306–329 (VGIVAGLVVLGAVVTGAVVAAVMW). At 330 to 346 (RKKSSDRNRGSYSQAAV) the chain is on the cytoplasmic side.

It belongs to the MHC class I family. Heterodimer of an alpha chain and a beta chain (beta-2-microglobulin).

The protein resides in the membrane. Functionally, involved in the presentation of foreign antigens to the immune system. In Pan troglodytes (Chimpanzee), this protein is Patr class I histocompatibility antigen, CH28 alpha chain.